Here is a 426-residue protein sequence, read N- to C-terminus: Histidine--tRNA ligase 1 (426 aa).

It belongs to the class-II aminoacyl-tRNA synthetase family. In terms of assembly, homodimer.

It is found in the cytoplasm. The catalysed reaction is tRNA(His) + L-histidine + ATP = L-histidyl-tRNA(His) + AMP + diphosphate + H(+). The polypeptide is Histidine--tRNA ligase 1 (Bacillus cereus (strain ATCC 14579 / DSM 31 / CCUG 7414 / JCM 2152 / NBRC 15305 / NCIMB 9373 / NCTC 2599 / NRRL B-3711)).